We begin with the raw amino-acid sequence, 316 residues long: Small ribosomal subunit protein RACK1 (316 aa).

WD repeat units follow at residues 4-46 (QMTL…WRLT), 52-93 (YGVP…WDLS), 94-135 (TGQT…WNTL), 137-180 (VCKY…WNLT), 181-221 (NCKL…LWDL), 222-263 (NEGK…WDLE), and 264-312 (GKVV…WQVS).

The protein belongs to the WD repeat G protein beta family. Ribosomal protein RACK1 subfamily.

The polypeptide is Small ribosomal subunit protein RACK1 (Biomphalaria glabrata (Bloodfluke planorb)).